A 212-amino-acid polypeptide reads, in one-letter code: uncharacterized protein (212 aa).

Residues 11-31 (NLIFFQFIVYFFFISLTILII) form a helical membrane-spanning segment.

It localises to the membrane. This is an uncharacterized protein from Rickettsia prowazekii (strain Madrid E).